The primary structure comprises 6548 residues: Epiplakin (6548 aa).

T33 carries the post-translational modification Phosphothreonine. 9 Plectin repeats span residues 41–78 (AALP…TGLG), 79–116 (LTLL…LELK), 117–154 (EKLL…RTLG), 155–192 (WRLL…KETW), 285–322 (RRYL…KGIA), 323–360 (LQLL…PELH), 362–398 (QLLV…QPLA), 399–436 (LRLL…EETR), and 437–470 (QRLS…PETG). Residues 49–1123 (SIAGVYVEAS…KASGLHLLPL (1075 aa)) are interaction with KRT5. Residues 545–565 (SVEELAAELKNIVEQAAATAK) adopt a coiled-coil conformation. Plectin repeat units follow at residues 611–648 (QRYL…PGTA), 649–686 (LILL…PDVY), 687–724 (AKLL…RDHG), 725–762 (IRLL…QILN), and 766–800 (LDPS…SETG). A coiled-coil region spans residues 851-886 (TEDRRRQLLQRYRQRKITLEQVTQLLEKEMRRWTDI). Plectin repeat units follow at residues 931 to 968 (HRYL…PSTA), 969 to 1006 (LALL…AEVY), 1007 to 1044 (GKLK…VEQA), 1224 to 1284 (QETL…TGLG), 1285 to 1322 (QQLL…MEQS), 1323 to 1360 (EHLR…QSEA), 1361 to 1398 (FPLL…EQTS), and 1402 to 1436 (TATG…ADTG). A Phosphothreonine modification is found at T1551. 5 Plectin repeats span residues 1572-1609 (RRSL…PGTA), 1610-1647 (LVLL…KETY), 1648-1685 (MKLL…RDHG), 1686-1723 (IRLL…EEMN), and 1727-1761 (SDPS…PETG). The tract at residues 1580–6545 (FIAGVLIQDT…PETGLLFLSL (4966 aa)) is interaction with KRT5. Positions 1819–1851 (RKLLREYRAQNIGLENLLEVITSTVEETEKQSQ) form a coiled coil. Plectin repeat units lie at residues 1898–1935 (RVYL…AGFA), 1936–1973 (AQML…EDLR), 1974–2011 (ERLV…REEA), 2012–2049 (LRLL…DDSL), 2225–2267 (KRYL…PGTA), 2268–2305 (LVLL…GEIQ), 2306–2343 (EKLL…RDHG), 2344–2381 (IRLL…EDMN), and 2385–2419 (ADPG…PETG). Phosphoserine is present on residues S2430 and S2508. The disordered stretch occupies residues 2578 to 2626 (AEETQESKPKPRDASLKQQDTGARGSGTSPDEGDAQDSSESARQQQEQT). Residues 2582-2592 (QESKPKPRDAS) are compositionally biased toward basic and acidic residues. 2 stretches are compositionally biased toward polar residues: residues 2593–2606 (LKQQ…SGTS) and 2615–2626 (SSESARQQQEQT). 5 Plectin repeats span residues 2740 to 2782 (KRYL…PGTA), 2783 to 2820 (LVLL…GEIQ), 2821 to 2858 (EKLL…RDHG), 2859 to 2896 (IRLL…EDMN), and 2900 to 2934 (ADPG…PETG). The interaction with KRT14 stretch occupies residues 2748–2940 (CIAGVLVPVQ…PETGFYMLQL (193 aa)). A disordered region spans residues 3093-3144 (AEETQESKPKPRDASLKQQDTGARGSGTSPDEGDAQDSSESARQQQEQTLRA). Positions 3097-3107 (QESKPKPRDAS) are enriched in basic and acidic residues. Polar residues-rich tracts occupy residues 3108–3121 (LKQQ…SGTS) and 3130–3144 (SSES…TLRA). At S3220 the chain carries Phosphoserine. Plectin repeat units follow at residues 3255 to 3297 (KRYL…PGTA), 3298 to 3335 (LVLL…GEIQ), 3336 to 3373 (EKLL…RDHG), 3374 to 3411 (IRLL…EDMN), and 3415 to 3449 (ADPG…PETG). 2 positions are modified to phosphoserine: S3460 and S3538. The segment at 3608–3659 (AEETQESKPKPRDASLKQQDTGARGSGTSPDEGDAQDSSESARQQQEQTLRA) is disordered. Residues 3612–3622 (QESKPKPRDAS) are compositionally biased toward basic and acidic residues. Composition is skewed to polar residues over residues 3623–3636 (LKQQ…SGTS) and 3645–3659 (SSES…TLRA). Phosphoserine is present on S3735. Plectin repeat units follow at residues 3770–3812 (KRYL…PGTA), 3813–3850 (LVLL…GEIQ), 3851–3888 (EKLL…RDHG), 3889–3926 (IRLL…EDMN), and 3930–3964 (ADPG…PETG). Phosphoserine occurs at positions 3975 and 4053. Positions 4123-4174 (AEETQESKPKPRDASLKQQDTGARGSGTSPDEGDAQDSSESARQQQEQTLRA) are disordered. Over residues 4127 to 4137 (QESKPKPRDAS) the composition is skewed to basic and acidic residues. Composition is skewed to polar residues over residues 4138 to 4151 (LKQQ…SGTS) and 4160 to 4174 (SSES…TLRA). 5 Plectin repeats span residues 4285-4327 (KRYL…PGTA), 4328-4365 (LVLL…GEIQ), 4366-4403 (EKLL…RDHG), 4404-4441 (IRLL…EDMN), and 4445-4479 (ADPG…PETG). The segment at 4638–4689 (AEETQESKPKPRDASLKQQDTGARGSGTSPDEGDAQDSSESARQQQEQTLRA) is disordered. Residues 4642–4652 (QESKPKPRDAS) show a composition bias toward basic and acidic residues. 2 stretches are compositionally biased toward polar residues: residues 4653 to 4666 (LKQQ…SGTS) and 4675 to 4689 (SSES…TLRA). S4765 is modified (phosphoserine). 5 Plectin repeats span residues 4800 to 4842 (KRYL…PGTA), 4843 to 4880 (LVLL…GEIQ), 4881 to 4918 (EKLL…RDHG), 4919 to 4956 (IRLL…EDMN), and 4960 to 4994 (ADPG…PETG). S5005 and S5083 each carry phosphoserine. Residues 5153–5204 (AEETQESKPKPRDASLKQQDTGARGSGTSPDEGDAQDSSESARQQQEQTLRA) form a disordered region. A compositionally biased stretch (basic and acidic residues) spans 5157 to 5167 (QESKPKPRDAS). Polar residues-rich tracts occupy residues 5168-5181 (LKQQ…SGTS) and 5190-5204 (SSES…TLRA). 5 Plectin repeats span residues 5315-5357 (KRYL…PGTA), 5358-5395 (LVLL…GEIQ), 5396-5433 (EKLL…RDHG), 5434-5471 (IRLL…EDMN), and 5475-5509 (ADPG…PETG). The interval 5668–5719 (AEETQESKPKPRDASLKQQDTGARGSGTSPDEGDAQDSSESARQQQEQTLRA) is disordered. A compositionally biased stretch (basic and acidic residues) spans 5672–5682 (QESKPKPRDAS). 2 stretches are compositionally biased toward polar residues: residues 5683–5696 (LKQQ…SGTS) and 5705–5719 (SSES…TLRA). Position 5795 is a phosphoserine (S5795). Plectin repeat units lie at residues 5830-5872 (KRYL…PGTA), 5873-5910 (LVLL…GEIQ), 5911-5948 (EKLL…RDHG), 5949-5986 (IRLL…EDMN), and 5990-6024 (ADPG…PETG). A phosphoserine mark is found at S6035 and S6113. The segment at 6183-6234 (AEETQESKPKPRDASLKQQDTGARGSGTSPDEGDAQDSSESARQQQEQTLRA) is disordered. Basic and acidic residues predominate over residues 6187–6197 (QESKPKPRDAS). Composition is skewed to polar residues over residues 6198-6211 (LKQQ…SGTS) and 6220-6234 (SSES…TLRA). S6310 is subject to Phosphoserine. Plectin repeat units follow at residues 6345 to 6387 (KRYL…PGTA), 6388 to 6425 (LVLL…GEIQ), 6426 to 6463 (EKLL…KNHG), 6464 to 6501 (IRLL…QEMN), and 6505 to 6539 (ADPG…PETG).

This sequence belongs to the plakin or cytolinker family. Interacts with KRT5, KRT14 and KRT5/KRT14 heterotetramer; interacts preferentially with assembled filaments rather than keratin monomers. Interacts with KRT8 and KRT18 and KRT8/KRT18 heterotetramer; interacts preferentially with assembled filaments rather than keratin monomers. Interacts with KRT1, VIM and DES; interaction is stronger with KRT1 than with VIM or DES; interaction is dependent of higher-order structure of intermediate filament. As to expression, high levels in skin, small intestine and salivary gland. Lower levels in lung, uterus and liver. Not detected in brain, kidney, muscle, heart or spleen. In skin, expressed in all epidermal layers but not in the dermis. In intestine, expressed exclusively in the epithelial cell layer of the villi. In liver, expressed at hepatocyte margins. Around the region of the wound, expressed in the upper half of the epidermis. Weakly expressed on the basilar side of the suprabasal layer of the epidermis at the wound's edge. Expressed strongly in the upper layer of the epidermis, especially in larger keratinocytes. Expressed in undifferentiated primary keratinocytes. Strongly expressed in ductal cells, and also expressed in acinar cells. Expressed in hepatocytes and cholangiocytes.

It is found in the cytoplasm. The protein resides in the cytoskeleton. It localises to the apicolateral cell membrane. Its subcellular location is the basolateral cell membrane. The protein localises to the cell junction. It is found in the hemidesmosome. The protein resides in the tight junction. It localises to the cell projection. Its function is as follows. Cytoskeletal linker protein that connects to intermediate filaments and controls their reorganization in response to stress. In response to mechanical stress like wound healing, is associated with the machinery for cellular motility by slowing down keratinocyte migration and proliferation and accelerating keratin bundling in proliferating keratinocytes thus contributing to tissue architecture. However in wound healing in corneal epithelium also positively regulates cell differentiation and proliferation and negatively regulates migration thereby controlling corneal epithelium morphogenesis and integrity. In response to cellular stress, plays a role in keratin filament reorganization, probably by protecting keratin filaments against disruption. During liver and pancreas injuries, plays a protective role by chaperoning disease-induced intermediate filament reorganization. In Mus musculus (Mouse), this protein is Epiplakin.